Here is a 292-residue protein sequence, read N- to C-terminus: Shikimate dehydrogenase (NADP(+)) (292 aa).

Shikimate contacts are provided by residues 22 to 24 and Ser-69; that span reads SLS. Lys-73 serves as the catalytic Proton acceptor. Shikimate-binding residues include Asn-94 and Asp-111. Residues 135 to 139 and Ile-236 contribute to the NADP(+) site; that span reads GVGGA. Tyr-238 contacts shikimate. Gly-260 contributes to the NADP(+) binding site.

Belongs to the shikimate dehydrogenase family. In terms of assembly, homodimer.

The enzyme catalyses shikimate + NADP(+) = 3-dehydroshikimate + NADPH + H(+). It functions in the pathway metabolic intermediate biosynthesis; chorismate biosynthesis; chorismate from D-erythrose 4-phosphate and phosphoenolpyruvate: step 4/7. Functionally, involved in the biosynthesis of the chorismate, which leads to the biosynthesis of aromatic amino acids. Catalyzes the reversible NADPH linked reduction of 3-dehydroshikimate (DHSA) to yield shikimate (SA). The protein is Shikimate dehydrogenase (NADP(+)) of Streptococcus pyogenes serotype M2 (strain MGAS10270).